The chain runs to 222 residues: Abasic site processing protein YedK (222 aa).

Cys-2 acts as the Nucleophile in catalysis. Cys-2 carries the post-translational modification Thiazolidine linkage to a ring-opened DNA abasic site. Glu-105 is a catalytic residue.

The protein belongs to the SOS response-associated peptidase family.

Formation and reversal of DNA-protein cross-link depends on DNA context. Catalyzes formation of the thiazolidine linkage in presence of abasic sites in single-stranded DNA. Mediates the reversal of the thiazolidine cross-link in presence of double stranded DNA. Functionally, sensor of abasic sites in single-stranded DNA (ssDNA) required to preserve genome integrity by promoting error-free repair of abasic sites. Recognizes and binds abasic sites in ssDNA at replication forks and chemically modifies the lesion by forming a covalent cross-link with DNA: forms a stable thiazolidine linkage between a ring-opened abasic site and the alpha-amino and sulfhydryl substituents of its N-terminal catalytic cysteine residue. The DNA-protein cross-link is then reversed: able to catalyze the reversal of the thiazolidine cross-link and cycle between a cross-link and a non-cross-linked state depending on DNA context: mediates self-reversal of the thiazolidine cross-link in double stranded DNA. May act as a protease: mediates autocatalytic processing of its N-terminal methionine in order to expose the catalytic cysteine. The polypeptide is Abasic site processing protein YedK (Escherichia coli (strain K12)).